A 298-amino-acid chain; its full sequence is uncharacterized protein (298 aa).

It localises to the cytoplasm. The protein localises to the nucleus. This is an uncharacterized protein from Schizosaccharomyces pombe (strain 972 / ATCC 24843) (Fission yeast).